A 632-amino-acid polypeptide reads, in one-letter code: 2-oxoacid:ferredoxin oxidoreductase subunit alpha (632 aa).

The YPITP motif motif lies at 254 to 258 (YPITP). T257 and R345 together coordinate substrate.

In terms of assembly, heterodimer composed of an alpha and a beta subunit.

It catalyses the reaction a 2-oxocarboxylate + 2 oxidized [2Fe-2S]-[ferredoxin] + CoA = an acyl-CoA + 2 reduced [2Fe-2S]-[ferredoxin] + CO2 + H(+). Its function is as follows. Catalyzes the coenzyme A-dependent oxidative decarboxylation of different 2-oxoacids such as 2-oxoglutarate, pyruvate and 2-oxobutyrate to form their CoA derivatives. This is 2-oxoacid:ferredoxin oxidoreductase subunit alpha from Saccharolobus solfataricus (Sulfolobus solfataricus).